The chain runs to 563 residues: Arginine--tRNA ligase (563 aa).

A 'HIGH' region motif is present at residues 121-131; the sequence is PNIAKPFSIGH.

It belongs to the class-I aminoacyl-tRNA synthetase family. As to quaternary structure, monomer.

It is found in the cytoplasm. It carries out the reaction tRNA(Arg) + L-arginine + ATP = L-arginyl-tRNA(Arg) + AMP + diphosphate. In Streptococcus pneumoniae (strain Taiwan19F-14), this protein is Arginine--tRNA ligase.